Consider the following 420-residue polypeptide: uncharacterized protein (420 aa).

Disordered regions lie at residues 84–103 (RSQA…GTSE) and 122–211 (SMNN…NKKS). Over residues 85–103 (SQANSESTPPEHTWSGTSE) the composition is skewed to polar residues. The span at 184–199 (SMTDQEVEQRRKEANK) shows a compositional bias: basic and acidic residues. 2 coiled-coil regions span residues 265-310 (TEKE…TATN) and 345-374 (LQFK…NFKE). A compositionally biased stretch (polar residues) spans 399-408 (KTSSPKTSIA). A disordered region spans residues 399 to 420 (KTSSPKTSIAGSHRRSTRSSEN). The span at 410-420 (SHRRSTRSSEN) shows a compositional bias: basic residues.

This is an uncharacterized protein from Caenorhabditis elegans.